Here is a 246-residue protein sequence, read N- to C-terminus: DNA repair protein RecO (246 aa).

The protein belongs to the RecO family.

Functionally, involved in DNA repair and RecF pathway recombination. The protein is DNA repair protein RecO of Alkaliphilus metalliredigens (strain QYMF).